A 739-amino-acid chain; its full sequence is Adenosylcobalamin-dependent ribonucleoside-triphosphate reductase (739 aa).

A disulfide bond links Cys-119 and Cys-419. The tract at residues 147–158 (SMPFSFLFDELM) is effector region-1. Residues 168-313 (ARSNISQIPR…ICNLIGKAVV (146 aa)) are effector region-2. Active-site residues include Cys-408 and Glu-410. Residues 565–626 (FHYGAYLIQR…NPNFASAGTV (62 aa)) form an adenosylcobalamin-binding-1 region. The interval 685–724 (LQQAPKEPIDKETYEKRSQEITGNVEEVFSQLNSDVKDLE) is adenosylcobalamin-binding-2.

The protein belongs to the class II ribonucleoside-triphosphate reductase family. Monomer. It depends on adenosylcob(III)alamin as a cofactor.

The enzyme catalyses a 2'-deoxyribonucleoside 5'-triphosphate + [thioredoxin]-disulfide + H2O = a ribonucleoside 5'-triphosphate + [thioredoxin]-dithiol. With respect to regulation, allosterically regulated by ATP and dNTP. The sequence is that of Adenosylcobalamin-dependent ribonucleoside-triphosphate reductase (rtpR) from Lactobacillus delbrueckii subsp. bulgaricus (strain ATCC 11842 / DSM 20081 / BCRC 10696 / JCM 1002 / NBRC 13953 / NCIMB 11778 / NCTC 12712 / WDCM 00102 / Lb 14).